A 219-amino-acid chain; its full sequence is Chloramphenicol acetyltransferase (219 aa).

Catalysis depends on His190, which acts as the Proton acceptor.

The protein belongs to the chloramphenicol acetyltransferase family. Homotrimer.

The enzyme catalyses chloramphenicol + acetyl-CoA = chloramphenicol 3-acetate + CoA. This enzyme is an effector of chloramphenicol resistance in bacteria. The chain is Chloramphenicol acetyltransferase (catB) from Clostridium butyricum.